We begin with the raw amino-acid sequence, 32 residues long: Cytochrome b6-f complex subunit 7 (32 aa).

Residues 9-27 form a helical membrane-spanning segment; it reads AAVFWVLIPVGLAGGALLL.

It belongs to the PetM family. In terms of assembly, the 4 large subunits of the cytochrome b6-f complex are cytochrome b6, subunit IV (17 kDa polypeptide, PetD), cytochrome f and the Rieske protein, while the 4 small subunits are PetG, PetL, PetM and PetN. The complex functions as a dimer.

It localises to the cellular thylakoid membrane. Functionally, component of the cytochrome b6-f complex, which mediates electron transfer between photosystem II (PSII) and photosystem I (PSI), cyclic electron flow around PSI, and state transitions. The protein is Cytochrome b6-f complex subunit 7 of Prochlorococcus marinus (strain MIT 9303).